A 339-amino-acid chain; its full sequence is Ketol-acid reductoisomerase (NADP(+)) (339 aa).

The region spanning 1–182 (MRVYYDRDAD…GGGRSGVIET (182 aa)) is the KARI N-terminal Rossmann domain. Residues 24 to 27 (YGSQ), R48, S51, T53, and 83 to 86 (DELQ) each bind NADP(+). Residue H108 is part of the active site. G134 contacts NADP(+). Positions 183-328 (TFKEECETDL…GKLRAMMPWI (146 aa)) constitute a KARI C-terminal knotted domain. Mg(2+) is bound by residues D191, E195, E227, and E231. Substrate is bound at residue S252.

It belongs to the ketol-acid reductoisomerase family. Requires Mg(2+) as cofactor.

It carries out the reaction (2R)-2,3-dihydroxy-3-methylbutanoate + NADP(+) = (2S)-2-acetolactate + NADPH + H(+). The enzyme catalyses (2R,3R)-2,3-dihydroxy-3-methylpentanoate + NADP(+) = (S)-2-ethyl-2-hydroxy-3-oxobutanoate + NADPH + H(+). It functions in the pathway amino-acid biosynthesis; L-isoleucine biosynthesis; L-isoleucine from 2-oxobutanoate: step 2/4. It participates in amino-acid biosynthesis; L-valine biosynthesis; L-valine from pyruvate: step 2/4. In terms of biological role, involved in the biosynthesis of branched-chain amino acids (BCAA). Catalyzes an alkyl-migration followed by a ketol-acid reduction of (S)-2-acetolactate (S2AL) to yield (R)-2,3-dihydroxy-isovalerate. In the isomerase reaction, S2AL is rearranged via a Mg-dependent methyl migration to produce 3-hydroxy-3-methyl-2-ketobutyrate (HMKB). In the reductase reaction, this 2-ketoacid undergoes a metal-dependent reduction by NADPH to yield (R)-2,3-dihydroxy-isovalerate. This chain is Ketol-acid reductoisomerase (NADP(+)), found in Brucella suis (strain ATCC 23445 / NCTC 10510).